Consider the following 444-residue polypeptide: 3-phosphoshikimate 1-carboxyvinyltransferase (444 aa).

Lys-24, Ser-25, and Arg-29 together coordinate 3-phosphoshikimate. Lys-24 serves as a coordination point for phosphoenolpyruvate. Residues Gly-97 and Arg-125 each contribute to the phosphoenolpyruvate site. Residues Ser-170, Gln-172, Asp-318, and Lys-345 each coordinate 3-phosphoshikimate. Residue Gln-172 coordinates phosphoenolpyruvate. The active-site Proton acceptor is Asp-318. Arg-349 and Arg-391 together coordinate phosphoenolpyruvate.

It belongs to the EPSP synthase family. Monomer.

It localises to the cytoplasm. The catalysed reaction is 3-phosphoshikimate + phosphoenolpyruvate = 5-O-(1-carboxyvinyl)-3-phosphoshikimate + phosphate. It functions in the pathway metabolic intermediate biosynthesis; chorismate biosynthesis; chorismate from D-erythrose 4-phosphate and phosphoenolpyruvate: step 6/7. Functionally, catalyzes the transfer of the enolpyruvyl moiety of phosphoenolpyruvate (PEP) to the 5-hydroxyl of shikimate-3-phosphate (S3P) to produce enolpyruvyl shikimate-3-phosphate and inorganic phosphate. This is 3-phosphoshikimate 1-carboxyvinyltransferase from Halorhodospira halophila (strain DSM 244 / SL1) (Ectothiorhodospira halophila (strain DSM 244 / SL1)).